The sequence spans 563 residues: Protein disulfide isomerase-like 1-4 (563 aa).

An N-terminal signal peptide occupies residues 1-22; sequence MRSRSLLLVALATLLLHASASA. Residues 40 to 64 form a disordered region; it reads NDPDGWLQEGSPDDDDDDDLFHHGQ. The 135-residue stretch at 46–180 folds into the Thioredoxin 1 domain; sequence LQEGSPDDDD…IVSWVNKKLA (135 aa). Residue asparagine 82 is glycosylated (N-linked (GlcNAc...) asparagine). Residues cysteine 102 and cysteine 105 each act as nucleophile in the active site. Cysteine 102 and cysteine 105 are joined by a disulfide. Asparagine 185 and asparagine 315 each carry an N-linked (GlcNAc...) asparagine glycan. A Thioredoxin 2 domain is found at 394 to 523; the sequence is FLEEKLTPFY…MYKFIKKHAS (130 aa). Active-site nucleophile residues include cysteine 444 and cysteine 447. An intrachain disulfide couples cysteine 444 to cysteine 447. The segment covering 529-542 has biased composition (basic and acidic residues); that stretch reads KRPDSSATKTEKDQ. The segment at 529-563 is disordered; sequence KRPDSSATKTEKDQSTASTNLRGERSSGTNFKDEL. Polar residues predominate over residues 543–563; the sequence is STASTNLRGERSSGTNFKDEL. Positions 560–563 match the Prevents secretion from ER motif; sequence KDEL.

The protein belongs to the protein disulfide isomerase family.

It is found in the endoplasmic reticulum lumen. It carries out the reaction Catalyzes the rearrangement of -S-S- bonds in proteins.. Acts as a protein-folding catalyst that interacts with nascent polypeptides to catalyze the formation, isomerization, and reduction or oxidation of disulfide bonds. May play a role in storage protein biogenesis. This is Protein disulfide isomerase-like 1-4 (PDIL1-4) from Oryza sativa subsp. japonica (Rice).